Reading from the N-terminus, the 422-residue chain is MVLIVGFNLRTSIASFSPICRSLFLFPKYRSRIIRPVVLLEKPFDKHFYATDSNPLITGFPETSKNCPPSVAATKNRLLMNCTEFDDHGNVRVISGDFKKMDLCKQNGLLPRDLRKLNTSINSIVPVILVREGSILINLLHIRALIKANSVLLFDVYGSQHSHSQSQFIYELEGRLKQKSSDFGWLPYEMRALETILVSVVNTLDSELHVLHNLVSDLLADFELDINQERLRTLLIFSKRLSGFLKKATLIRDVLDELLEQDQDLAGMYLTERLKTGKPRDLDKHDEVELLLETYCKQVDEIVQQTDNLVGNIRSTEEICNIMLDANRNSLMLLGLKLSAMTLGLGFGAVVASLYGMNLQNGLENHPYAFYITTGSIFAFAAFLSSLGILKIRRLKRIQMALYHRCNLPISLDPRSLRPPYL.

The N-terminal 49 residues, 1–49 (MVLIVGFNLRTSIASFSPICRSLFLFPKYRSRIIRPVVLLEKPFDKHFY), are a transit peptide targeting the mitochondrion. A helical membrane pass occupies residues 331–351 (LMLLGLKLSAMTLGLGFGAVV). The short motif at 355 to 358 (YGMN) is the YGMN element. A helical transmembrane segment spans residues 370–390 (FYITTGSIFAFAAFLSSLGIL).

The protein belongs to the CorA metal ion transporter (MIT) (TC 1.A.35) family. In terms of assembly, homopentamer. Forms homooligomers. Interacts with MFM1.

It is found in the mitochondrion inner membrane. Functionally, high-conductance magnesium-selective channel that mediates the influx of magnesium into the mitochondrial matrix. Essential for the splicing of mRNA group II introns in mitochondria by affecting mitochondrial magnesium concentrations, which are critical for group II intron splicing. It also suppresses a variety of mitochondrial intron mutations and its absence may disturb the assembly of mitochondrial membrane complexes. The chain is Mitochondrial inner membrane magnesium transporter mrs2 (mrs2) from Schizosaccharomyces pombe (strain 972 / ATCC 24843) (Fission yeast).